A 429-amino-acid chain; its full sequence is Glutamate-1-semialdehyde 2,1-aminomutase 2 (429 aa).

Position 268 is an N6-(pyridoxal phosphate)lysine (Lys-268).

It belongs to the class-III pyridoxal-phosphate-dependent aminotransferase family. HemL subfamily. As to quaternary structure, homodimer. It depends on pyridoxal 5'-phosphate as a cofactor.

The protein localises to the cytoplasm. It catalyses the reaction (S)-4-amino-5-oxopentanoate = 5-aminolevulinate. The protein operates within porphyrin-containing compound metabolism; protoporphyrin-IX biosynthesis; 5-aminolevulinate from L-glutamyl-tRNA(Glu): step 2/2. The chain is Glutamate-1-semialdehyde 2,1-aminomutase 2 from Bacillus cereus (strain ATCC 10987 / NRS 248).